We begin with the raw amino-acid sequence, 851 residues long: Glycogen phosphorylase, liver form (851 aa).

At Ala2 the chain carries N-acetylalanine. Position 15 is a phosphoserine; by PHK; in form phosphorylase a (Ser15). AMP is bound by residues Asp43 to Asn45, Tyr76, and Arg310. Lys364 is subject to N6-succinyllysine. Residue Lys470 is modified to N6-acetyllysine. A phosphoserine mark is found at Ser524, Ser561, and Ser639. The residue at position 681 (Lys681) is an N6-(pyridoxal phosphate)lysine. Residue Lys796 is modified to N6-acetyllysine.

This sequence belongs to the glycogen phosphorylase family. In terms of assembly, homodimer; enzymatically active. Interacts with PPP1R3B; recruits the phosphatase PP1 which dephosphorylates and inactivates PYGL/glycogen phosphorylase. It depends on pyridoxal 5'-phosphate as a cofactor. Acetylation, which is up-regulated by glucose and insulin and down-regulated by glucagon, inhibits the glycogen phosphorylase activity by promoting PPP1R3B-mediated recruitment of phosphatase PP1 and Ser-15 dephosphorylation. Post-translationally, phosphorylation at Ser-15 converts inactive phosphorylase b into active phosphorylase a. Dephosphorylation of Ser-15 by phosphatase PP1 inactivates the enzyme.

The protein resides in the cytoplasm. It is found in the cytosol. It catalyses the reaction [(1-&gt;4)-alpha-D-glucosyl](n) + phosphate = [(1-&gt;4)-alpha-D-glucosyl](n-1) + alpha-D-glucose 1-phosphate. With respect to regulation, allosterically regulated through the non-covalent binding of metabolites, being activated by AMP and inhibited by ATP, ADP, and glucose-6-phosphate. The activity is also controlled by post-translational modifications including phosphorylation and acetylation. In terms of biological role, allosteric enzyme that catalyzes the rate-limiting step in glycogen catabolism, the phosphorolytic cleavage of glycogen to produce glucose-1-phosphate, and plays a central role in maintaining cellular and organismal glucose homeostasis. This chain is Glycogen phosphorylase, liver form, found in Bos taurus (Bovine).